Reading from the N-terminus, the 71-residue chain is DNA-directed RNA polymerase subunit omega (71 aa).

It belongs to the RNA polymerase subunit omega family. As to quaternary structure, the RNAP catalytic core consists of 2 alpha, 1 beta/beta' and 1 omega subunit. When a sigma factor is associated with the core the holoenzyme is formed, which can initiate transcription.

The catalysed reaction is RNA(n) + a ribonucleoside 5'-triphosphate = RNA(n+1) + diphosphate. Functionally, promotes RNA polymerase assembly. Latches the N- and C-terminal regions of the beta' subunit thereby facilitating its interaction with the beta and alpha subunits. This chain is DNA-directed RNA polymerase subunit omega, found in Wolinella succinogenes (strain ATCC 29543 / DSM 1740 / CCUG 13145 / JCM 31913 / LMG 7466 / NCTC 11488 / FDC 602W) (Vibrio succinogenes).